We begin with the raw amino-acid sequence, 303 residues long: NAC domain-containing protein 48 (303 aa).

The 151-residue stretch at 9-159 (LPPGFRFHPT…DWVLCRIYNK (151 aa)) folds into the NAC domain.

As to quaternary structure, interacts with NAC071. As to expression, widely expressed.

It localises to the nucleus. Transcription activator that binds to the promoter of the stress response gene LEA19. Involved in tolerance to abiotic stresses. Transcription activator involved in response to abiotic and biotic stresses. Involved in drought and salt stress responses, and defense response to the rice blast fungus. Transcription activator involved tolerance to cold and salt stresses. Transcription activator involved in tolerance to drought stress. Targets directly and activates genes involved in membrane modification, nicotianamine (NA) biosynthesis, glutathione relocation, accumulation of phosphoadenosine phosphosulfate and glycosylation in roots. Controls root growth at early vegetative stage through chromatin modification and histone lysine deacytaltion by HDAC1. The sequence is that of NAC domain-containing protein 48 from Oryza sativa subsp. japonica (Rice).